Here is a 125-residue protein sequence, read N- to C-terminus: Holo-[acyl-carrier-protein] synthase (125 aa).

Positions 8 and 57 each coordinate Mg(2+).

The protein belongs to the P-Pant transferase superfamily. AcpS family. It depends on Mg(2+) as a cofactor.

Its subcellular location is the cytoplasm. It catalyses the reaction apo-[ACP] + CoA = holo-[ACP] + adenosine 3',5'-bisphosphate + H(+). In terms of biological role, transfers the 4'-phosphopantetheine moiety from coenzyme A to a Ser of acyl-carrier-protein. In Blochmanniella floridana, this protein is Holo-[acyl-carrier-protein] synthase.